A 93-amino-acid chain; its full sequence is Cell division protein CrgA (93 aa).

A run of 2 helical transmembrane segments spans residues 31-51 (VWFVTLFVGLMLIGLVWLMVF) and 70-90 (LGPWNYAIAFAFMITGLLLTM).

This sequence belongs to the CrgA family.

The protein resides in the cell membrane. Its function is as follows. Involved in cell division. The sequence is that of Cell division protein CrgA from Mycobacterium leprae (strain Br4923).